Consider the following 508-residue polypeptide: Photosystem II CP47 reaction center protein (508 aa).

6 helical membrane passes run 21 to 36 (SVHI…WAGS), 101 to 115 (IVFS…IWHW), 140 to 156 (GIHL…FGAF), 203 to 218 (IAAG…FHLS), 237 to 252 (VLSS…AFVV), and 457 to 472 (SFAL…HGAR).

The protein belongs to the PsbB/PsbC family. PsbB subfamily. As to quaternary structure, PSII is composed of 1 copy each of membrane proteins PsbA, PsbB, PsbC, PsbD, PsbE, PsbF, PsbH, PsbI, PsbJ, PsbK, PsbL, PsbM, PsbT, PsbX, PsbY, PsbZ, Psb30/Ycf12, at least 3 peripheral proteins of the oxygen-evolving complex and a large number of cofactors. It forms dimeric complexes. The cofactor is Binds multiple chlorophylls. PSII binds additional chlorophylls, carotenoids and specific lipids..

The protein localises to the plastid. It is found in the chloroplast thylakoid membrane. Its function is as follows. One of the components of the core complex of photosystem II (PSII). It binds chlorophyll and helps catalyze the primary light-induced photochemical processes of PSII. PSII is a light-driven water:plastoquinone oxidoreductase, using light energy to abstract electrons from H(2)O, generating O(2) and a proton gradient subsequently used for ATP formation. In Vitis vinifera (Grape), this protein is Photosystem II CP47 reaction center protein.